The sequence spans 312 residues: Beta-lactamase regulatory protein BlaB (312 aa).

This Streptomyces cacaoi protein is Beta-lactamase regulatory protein BlaB (blaB).